Reading from the N-terminus, the 125-residue chain is Small ribosomal subunit protein uS12 (125 aa).

The interval 1-31 (MPTINQLVRQGREVETTKSKSPAMQNSPQRR) is disordered. Polar residues predominate over residues 19–29 (SKSPAMQNSPQ). Asp-89 carries the post-translational modification 3-methylthioaspartic acid.

Belongs to the universal ribosomal protein uS12 family. As to quaternary structure, part of the 30S ribosomal subunit. Contacts proteins S8 and S17. May interact with IF1 in the 30S initiation complex.

With S4 and S5 plays an important role in translational accuracy. Its function is as follows. Interacts with and stabilizes bases of the 16S rRNA that are involved in tRNA selection in the A site and with the mRNA backbone. Located at the interface of the 30S and 50S subunits, it traverses the body of the 30S subunit contacting proteins on the other side and probably holding the rRNA structure together. The combined cluster of proteins S8, S12 and S17 appears to hold together the shoulder and platform of the 30S subunit. This Paracidovorax citrulli (strain AAC00-1) (Acidovorax citrulli) protein is Small ribosomal subunit protein uS12.